Reading from the N-terminus, the 509-residue chain is Oligo-1,6-glucosidase (509 aa).

The Nucleophile role is filled by Asp198. Glu254 serves as the catalytic Proton donor.

Belongs to the glycosyl hydrolase 13 family.

Its subcellular location is the cytoplasm. The enzyme catalyses Hydrolysis of (1-&gt;6)-alpha-D-glucosidic linkages in some oligosaccharides produced from starch and glycogen by alpha-amylase, and in isomaltose.. The polypeptide is Oligo-1,6-glucosidase (malL) (Bacillus sp. (strain F5)).